The sequence spans 345 residues: Alkaline phosphatase isozyme conversion protein (345 aa).

The N-terminal stretch at 1-24 is a signal peptide; it reads MFSALRHRTAALALGVCFILPVHA. Zn(2+) is bound by residues His117, Asp143, Glu176, and Asp204.

It belongs to the peptidase M28 family. M28C subfamily.

This protein, presumably an aminopeptidase, mediates the conversion of E.coli alkaline phosphatase isozyme 1, to isozymes 2 and 3 by removing, one by one, the two N-terminal arginine residues. The sequence is that of Alkaline phosphatase isozyme conversion protein (iap) from Escherichia coli (strain K12).